Reading from the N-terminus, the 130-residue chain is Small ribosomal subunit protein uS9 (130 aa).

This sequence belongs to the universal ribosomal protein uS9 family.

This Tolumonas auensis (strain DSM 9187 / NBRC 110442 / TA 4) protein is Small ribosomal subunit protein uS9.